Here is a 134-residue protein sequence, read N- to C-terminus: uncharacterized protein (134 aa).

The next 3 membrane-spanning stretches (helical) occupy residues 5–25 (FGIFSFLAVSVSAAGFFFGGF), 30–50 (LILLSLMAIEFISTTLKETII), and 62–82 (LVKKLVTLALISVCHFFDQLL).

This sequence belongs to the bacteriophage holin family. Cp-1 holin subfamily.

It is found in the cell membrane. This is an uncharacterized protein from Bacillus subtilis (strain 168).